We begin with the raw amino-acid sequence, 594 residues long: UV-stimulated scaffold protein A homolog (594 aa).

The interval 24-170 (RKNLNRFIRE…VTLKKTKFVD (147 aa)) is VHS-like. The stretch at 170–198 (DYENGAKKIEAERKRKKILEERKMKMIEN) forms a coiled coil. The UVSSA-type zinc-finger motif lies at 466–493 (RKVCLAKMKSGKLCPRKDYYTCPLHGKI). 4 residues coordinate Zn(2+): C469, C479, C487, and H490. A coiled-coil region spans residues 503–540 (INEEDRLEENYRKEQNHLKEADKIRQMIEKEYESKTKR). Residues 533-558 (EYESKTKRRKKHDVDTTASEDVRNRL) are disordered. Residues 544-558 (HDVDTTASEDVRNRL) show a composition bias toward basic and acidic residues.

It belongs to the UVSSA family.

Its subcellular location is the chromosome. Its function is as follows. Factor involved in transcription-coupled nucleotide excision repair (TC-NER) in response to UV damage. TC-NER allows RNA polymerase II-blocking lesions to be rapidly removed from the transcribed strand of active genes. The protein is UV-stimulated scaffold protein A homolog of Caenorhabditis elegans.